We begin with the raw amino-acid sequence, 613 residues long: Immunoglobulin superfamily member 8 (613 aa).

The first 27 residues, M1–A27, serve as a signal peptide directing secretion. Ig-like C2-type domains follow at residues R28–L149, P162–I286, S303–S424, and P431–A560. Residues R28–T579 lie on the Extracellular side of the membrane. A disulfide bridge connects residues C49 and C127. N50 carries N-linked (GlcNAc...) asparagine glycosylation. Residues V155–M174 are disordered. A disulfide bond links C186 and C270. An EWI motif motif is present at residues E274–I276. 2 disulfide bridges follow: C326–C406 and C462–C544. N327 and N463 each carry an N-linked (GlcNAc...) asparagine glycan. S518 is subject to Phosphoserine. A helical membrane pass occupies residues L580–G600. Residues T601–R613 are Cytoplasmic-facing. Residues C604 and C605 are each lipidated (S-palmitoyl cysteine).

As to quaternary structure, interacts directly with CD82, CD81/tetraspanin-28 and CD9/tetraspanin-29. Also interacts with integrin alpha-3/beta-1 and integrin alpha-4/beta-1. Interacts with HSPA8; this interaction modulates migratory and antigen-presenting capacities of dendritic cells. As to expression, expressed in brain, kidney, testis, liver and placenta with moderate expression in all other tissues. Detected on a majority of B-cells, T-cells, and natural killer cells. Expressed on dendritic cells.

It localises to the cell membrane. Member of the immunoglobulin superfamily (IgSF) that links tetraspanin-enriched microdomains to the actin cytoskeleton and plays several important roles in innate and adaptive immunity. Acts as an inducible receptor of HSPA8 on dendritic cells to enhance the CCL21/SLC-dependent migration of activated mature dendritic cells while attenuating their antigen-specific stimulatory capacities. In complex with alpha-actinins ACTN1 and ACTN4, regulates actin dynamics in the immune synapse and subsequent T-cell activation. Inhibits the entry of several viruses such as hepatitis C Virus (HCV) or HIV-1. Mechanistically, promotes a change in CD81 organization at the plasma membrane by significantly restricting its diffusion which in turn influences CD81 interaction with Claudin-1/CLDN1, preventing CLDN1 from acting as a co-receptor required for HCV entry. Accumulates at the presynaptic terminal, the producer cell side of the virological synapse, to prevent HIV-1 Env-mediated cell-cell fusion. Highly expressed on malignant cells with antigen presentation defects, interacts with NK receptor KIR3DL2 to suppress NK-cell cytotoxicity. May participate in the regulation of neurite outgrowth and maintenance of the neural network in the adult brain. The polypeptide is Immunoglobulin superfamily member 8 (IGSF8) (Homo sapiens (Human)).